The primary structure comprises 623 residues: Glucokinase regulatory protein (623 aa).

SIS domains lie at Val-90 to Val-286 and Val-320 to Phe-476. Beta-D-fructose 1-phosphate is bound by residues Thr-109–Ser-110, Glu-153, and Ser-179–Gly-181. A beta-D-fructose 6-phosphate-binding site is contributed by Thr-109–Ser-110. Residue Ser-179–Gly-181 participates in beta-D-fructose 6-phosphate binding. An important for interaction with GCK region spans residues Ala-199–Val-200. Residue Glu-348 coordinates beta-D-fructose 1-phosphate. The segment at Leu-463–Phe-465 is essential for interaction with GCK.

Belongs to the GCKR family. In terms of assembly, interacts (fructose 6-phosphate bound form) with GCK.

It is found in the cytoplasm. Its subcellular location is the nucleus. The protein localises to the mitochondrion. Regulates glucokinase (GCK) by forming an inactive complex with this enzyme. Acts by promoting GCK recruitment to the nucleus, possibly to provide a reserve of GCK that can be quickly released in the cytoplasm after a meal. The affinity of GCKR for GCK is modulated by fructose metabolites: GCKR with bound fructose 6-phosphate has increased affinity for GCK, while GCKR with bound fructose 1-phosphate has strongly decreased affinity for GCK and does not inhibit GCK activity. The chain is Glucokinase regulatory protein from Mus musculus (Mouse).